The sequence spans 70 residues: Turripeptide Gsg9.2 (70 aa).

The N-terminal stretch at 1-20 (MKVYCLLLVLLVGLVSQAHG) is a signal peptide. One can recognise a Kazal-like domain in the interval 21-70 (QLDKKCQMVCTMDYRPVCGSDGRTYPNKCTLTSTACMSQRSITVFHDGEC). Cystine bridges form between Cys26-Cys56, Cys30-Cys49, and Cys38-Cys70.

It belongs to the conopeptide P-like superfamily. Expressed by the venom duct.

Its subcellular location is the secreted. Functionally, acts as a neurotoxin by inhibiting an ion channel. May also act as a serine protease inhibitor, since it possess the kazal serine protease inhibitor signature. The sequence is that of Turripeptide Gsg9.2 from Gemmula sogodensis (Gem-turris).